Reading from the N-terminus, the 643-residue chain is Transcription elongation factor B polypeptide 3 (643 aa).

Residues 9-82 (DVVRHYQRSI…TKWKAMVAKE (74 aa)) enclose the TFIIS N-terminal domain. Disordered regions lie at residues 86–289 (IAST…MGAN) and 302–351 (SSKK…SKKP). The segment covering 94–106 (HNEEDSGKTKSSD) has biased composition (basic and acidic residues). A compositionally biased stretch (polar residues) spans 114–124 (KGGNSSSGEDL). At Ser-120 the chain carries Phosphoserine. Positions 127-136 (SKHKSKHAKS) are enriched in basic residues. Composition is skewed to basic and acidic residues over residues 164-198 (HDKSKDRDKDREGQKEAKEHKEKKSNGEHKSKDSS) and 207-237 (SKSESHKSEHTKSKHEKDKTSHSELKEVKDK). Positions 238 to 255 (SSKHKSSSSKSSKRSHSP) are enriched in basic residues. A compositionally biased stretch (low complexity) spans 302-336 (SSKKSSSNSKSKFVAKPTAAPSSSALSAPTTAGSS). The tract at residues 413–571 (AQGISSKTMR…PPRSVQRKQE (159 aa)) is activation domain. Residues 439-448 (SLFDLCTRVL) form an interacting with Elongin BC complex region.

Its subcellular location is the nucleus. SIII, also known as elongin, is a general transcription elongation factor that increases the RNA polymerase II transcription elongation past template-encoded arresting sites. Subunit A is transcriptionally active and its transcription activity is strongly enhanced by binding to the dimeric complex of the SIII regulatory subunits B and C (elongin BC complex). May play an important role in metamorphosis. This Drosophila melanogaster (Fruit fly) protein is Transcription elongation factor B polypeptide 3 (EloA).